Reading from the N-terminus, the 621-residue chain is 1-deoxy-D-xylulose-5-phosphate synthase (621 aa).

Thiamine diphosphate-binding positions include His80 and Gly121 to Ser123. Asp152 serves as a coordination point for Mg(2+). Residues Gly153 to Ala154, Asn181, Tyr288, and Glu370 contribute to the thiamine diphosphate site. Asn181 lines the Mg(2+) pocket.

Belongs to the transketolase family. DXPS subfamily. As to quaternary structure, homodimer. The cofactor is Mg(2+). Requires thiamine diphosphate as cofactor.

The catalysed reaction is D-glyceraldehyde 3-phosphate + pyruvate + H(+) = 1-deoxy-D-xylulose 5-phosphate + CO2. It functions in the pathway metabolic intermediate biosynthesis; 1-deoxy-D-xylulose 5-phosphate biosynthesis; 1-deoxy-D-xylulose 5-phosphate from D-glyceraldehyde 3-phosphate and pyruvate: step 1/1. Functionally, catalyzes the acyloin condensation reaction between C atoms 2 and 3 of pyruvate and glyceraldehyde 3-phosphate to yield 1-deoxy-D-xylulose-5-phosphate (DXP). In Vibrio campbellii (strain ATCC BAA-1116), this protein is 1-deoxy-D-xylulose-5-phosphate synthase.